Here is a 430-residue protein sequence, read N- to C-terminus: UDP-N-acetylglucosamine 1-carboxyvinyltransferase 1 (430 aa).

22–23 (KN) serves as a coordination point for phosphoenolpyruvate. Arg-93 contributes to the UDP-N-acetyl-alpha-D-glucosamine binding site. Cys-117 (proton donor) is an active-site residue. Cys-117 carries the 2-(S-cysteinyl)pyruvic acid O-phosphothioketal modification. Residues 122–126 (RPVDL), Asp-305, and Val-327 each bind UDP-N-acetyl-alpha-D-glucosamine.

The protein belongs to the EPSP synthase family. MurA subfamily.

Its subcellular location is the cytoplasm. The catalysed reaction is phosphoenolpyruvate + UDP-N-acetyl-alpha-D-glucosamine = UDP-N-acetyl-3-O-(1-carboxyvinyl)-alpha-D-glucosamine + phosphate. It functions in the pathway cell wall biogenesis; peptidoglycan biosynthesis. In terms of biological role, cell wall formation. Adds enolpyruvyl to UDP-N-acetylglucosamine. The polypeptide is UDP-N-acetylglucosamine 1-carboxyvinyltransferase 1 (Listeria monocytogenes serotype 4b (strain F2365)).